Consider the following 195-residue polypeptide: Nucleoside triphosphate pyrophosphatase (195 aa).

The active-site Proton acceptor is the D70.

The protein belongs to the Maf family. A divalent metal cation serves as cofactor.

The protein localises to the cytoplasm. The catalysed reaction is a ribonucleoside 5'-triphosphate + H2O = a ribonucleoside 5'-phosphate + diphosphate + H(+). It catalyses the reaction a 2'-deoxyribonucleoside 5'-triphosphate + H2O = a 2'-deoxyribonucleoside 5'-phosphate + diphosphate + H(+). Nucleoside triphosphate pyrophosphatase. May have a dual role in cell division arrest and in preventing the incorporation of modified nucleotides into cellular nucleic acids. The sequence is that of Nucleoside triphosphate pyrophosphatase from Synechocystis sp. (strain ATCC 27184 / PCC 6803 / Kazusa).